A 155-amino-acid chain; its full sequence is Small ribosomal subunit protein uS7cz/uS7cy (155 aa).

It belongs to the universal ribosomal protein uS7 family. In terms of assembly, part of the 30S ribosomal subunit.

It is found in the plastid. The protein resides in the chloroplast. In terms of biological role, one of the primary rRNA binding proteins, it binds directly to 16S rRNA where it nucleates assembly of the head domain of the 30S subunit. The sequence is that of Small ribosomal subunit protein uS7cz/uS7cy (rps7-A) from Angiopteris evecta (Mule's foot fern).